The chain runs to 227 residues: 2-C-methyl-D-erythritol 4-phosphate cytidylyltransferase (227 aa).

The protein belongs to the IspD/TarI cytidylyltransferase family. IspD subfamily.

It carries out the reaction 2-C-methyl-D-erythritol 4-phosphate + CTP + H(+) = 4-CDP-2-C-methyl-D-erythritol + diphosphate. Its pathway is isoprenoid biosynthesis; isopentenyl diphosphate biosynthesis via DXP pathway; isopentenyl diphosphate from 1-deoxy-D-xylulose 5-phosphate: step 2/6. Catalyzes the formation of 4-diphosphocytidyl-2-C-methyl-D-erythritol from CTP and 2-C-methyl-D-erythritol 4-phosphate (MEP). This Mycobacterium marinum (strain ATCC BAA-535 / M) protein is 2-C-methyl-D-erythritol 4-phosphate cytidylyltransferase.